Consider the following 263-residue polypeptide: uncharacterized protein (263 aa).

Residues 12–247 enclose the ABC transporter domain; that stretch reads LETQNLAIGY…ENLAKIYRTS (236 aa). Residue 44–51 participates in ATP binding; sequence GANGAGKS.

The protein belongs to the ABC transporter superfamily.

This is an uncharacterized protein from Haemophilus influenzae (strain ATCC 51907 / DSM 11121 / KW20 / Rd).